Reading from the N-terminus, the 205-residue chain is Guanylate kinase (205 aa).

One can recognise a Guanylate kinase-like domain in the interval 17-195 (SRLLVLSGPS…AVEAVERLLF (179 aa)). 24-31 (GPSGVGKD) is an ATP binding site.

Belongs to the guanylate kinase family.

It is found in the cytoplasm. The catalysed reaction is GMP + ATP = GDP + ADP. Its function is as follows. Essential for recycling GMP and indirectly, cGMP. In Gloeobacter violaceus (strain ATCC 29082 / PCC 7421), this protein is Guanylate kinase.